Reading from the N-terminus, the 675-residue chain is DNA ligase (675 aa).

Residues 35 to 39, 84 to 85, and E118 contribute to the NAD(+) site; these read DAVYD and SL. K120 serves as the catalytic N6-AMP-lysine intermediate. NAD(+) contacts are provided by R141, E178, K295, and K319. Residues C413, C416, C431, and C436 each coordinate Zn(2+). Positions 598-675 constitute a BRCT domain; sequence GAIGALTGQT…DEAELKALLS (78 aa).

It belongs to the NAD-dependent DNA ligase family. LigA subfamily. Requires Mg(2+) as cofactor. The cofactor is Mn(2+).

The enzyme catalyses NAD(+) + (deoxyribonucleotide)n-3'-hydroxyl + 5'-phospho-(deoxyribonucleotide)m = (deoxyribonucleotide)n+m + AMP + beta-nicotinamide D-nucleotide.. DNA ligase that catalyzes the formation of phosphodiester linkages between 5'-phosphoryl and 3'-hydroxyl groups in double-stranded DNA using NAD as a coenzyme and as the energy source for the reaction. It is essential for DNA replication and repair of damaged DNA. In Synechococcus sp. (strain RCC307), this protein is DNA ligase.